Reading from the N-terminus, the 169-residue chain is Peptide deformylase (169 aa).

Fe cation-binding residues include cysteine 91 and histidine 133. Glutamate 134 is a catalytic residue. Histidine 137 is a Fe cation binding site.

It belongs to the polypeptide deformylase family. It depends on Fe(2+) as a cofactor.

It carries out the reaction N-terminal N-formyl-L-methionyl-[peptide] + H2O = N-terminal L-methionyl-[peptide] + formate. Functionally, removes the formyl group from the N-terminal Met of newly synthesized proteins. Requires at least a dipeptide for an efficient rate of reaction. N-terminal L-methionine is a prerequisite for activity but the enzyme has broad specificity at other positions. The sequence is that of Peptide deformylase from Shigella boydii serotype 18 (strain CDC 3083-94 / BS512).